Here is a 356-residue protein sequence, read N- to C-terminus: Nicotinate-nucleotide--dimethylbenzimidazole phosphoribosyltransferase (356 aa).

Glu-317 serves as the catalytic Proton acceptor.

Belongs to the CobT family. As to quaternary structure, homodimer.

The catalysed reaction is 5,6-dimethylbenzimidazole + nicotinate beta-D-ribonucleotide = alpha-ribazole 5'-phosphate + nicotinate + H(+). The protein operates within nucleoside biosynthesis; alpha-ribazole biosynthesis; alpha-ribazole from 5,6-dimethylbenzimidazole: step 1/2. Functionally, catalyzes the synthesis of alpha-ribazole-5'-phosphate from nicotinate mononucleotide (NAMN) and 5,6-dimethylbenzimidazole (DMB). The protein is Nicotinate-nucleotide--dimethylbenzimidazole phosphoribosyltransferase of Salmonella paratyphi A (strain ATCC 9150 / SARB42).